We begin with the raw amino-acid sequence, 305 residues long: Acetylglutamate kinase (305 aa).

Residues 67-68, Arg-89, and Asn-190 each bind substrate; that span reads GG.

It belongs to the acetylglutamate kinase family. ArgB subfamily.

It localises to the cytoplasm. The catalysed reaction is N-acetyl-L-glutamate + ATP = N-acetyl-L-glutamyl 5-phosphate + ADP. Its pathway is amino-acid biosynthesis; L-arginine biosynthesis; N(2)-acetyl-L-ornithine from L-glutamate: step 2/4. Its function is as follows. Catalyzes the ATP-dependent phosphorylation of N-acetyl-L-glutamate. This is Acetylglutamate kinase from Bifidobacterium animalis subsp. lactis (strain AD011).